The chain runs to 239 residues: Adapter protein MecA (239 aa).

Residues 118 to 128 are compositionally biased toward basic and acidic residues; that stretch reads EQRTKEKEAQG. The tract at residues 118–137 is disordered; the sequence is EQRTKEKEAQGSKRQKSSAR.

It belongs to the MecA family. In terms of assembly, homodimer.

In terms of biological role, enables the recognition and targeting of unfolded and aggregated proteins to the ClpC protease or to other proteins involved in proteolysis. In Staphylococcus aureus (strain Mu3 / ATCC 700698), this protein is Adapter protein MecA.